Here is a 179-residue protein sequence, read N- to C-terminus: Large ribosomal subunit protein uL5 (179 aa).

Belongs to the universal ribosomal protein uL5 family. As to quaternary structure, part of the 50S ribosomal subunit; part of the 5S rRNA/L5/L18/L25 subcomplex. Contacts the 5S rRNA and the P site tRNA. Forms a bridge to the 30S subunit in the 70S ribosome.

Functionally, this is one of the proteins that bind and probably mediate the attachment of the 5S RNA into the large ribosomal subunit, where it forms part of the central protuberance. In the 70S ribosome it contacts protein S13 of the 30S subunit (bridge B1b), connecting the 2 subunits; this bridge is implicated in subunit movement. Contacts the P site tRNA; the 5S rRNA and some of its associated proteins might help stabilize positioning of ribosome-bound tRNAs. This is Large ribosomal subunit protein uL5 from Pseudomonas aeruginosa (strain LESB58).